Reading from the N-terminus, the 355-residue chain is Uroporphyrinogen decarboxylase (355 aa).

Residues 27–31, aspartate 77, tyrosine 154, threonine 209, and histidine 327 each bind substrate; that span reads RQAGR.

It belongs to the uroporphyrinogen decarboxylase family. In terms of assembly, homodimer.

It localises to the cytoplasm. It carries out the reaction uroporphyrinogen III + 4 H(+) = coproporphyrinogen III + 4 CO2. It participates in porphyrin-containing compound metabolism; protoporphyrin-IX biosynthesis; coproporphyrinogen-III from 5-aminolevulinate: step 4/4. Catalyzes the decarboxylation of four acetate groups of uroporphyrinogen-III to yield coproporphyrinogen-III. This is Uroporphyrinogen decarboxylase from Erwinia tasmaniensis (strain DSM 17950 / CFBP 7177 / CIP 109463 / NCPPB 4357 / Et1/99).